The following is a 739-amino-acid chain: NAD(P)H-quinone oxidoreductase subunit 5, chloroplastic (739 aa).

A run of 16 helical transmembrane segments spans residues 9 to 29 (WVIPLLPLPVIMSMGFGLILI), 39 to 59 (IWAFPSVLLLSIAMVFSVQLS), 89 to 109 (IDPLTSIMLILITTVGILVLI), 125 to 145 (FVYISFFNTSMLGLVTSSNLI), 147 to 167 (IYFFWELVGMCSYLLIGFWFT), 185 to 205 (GDFGLLLGILGFFWITGSLEF), 219 to 239 (NGVNSLLTTLCAFLLFLGAVA), 258 to 278 (TPISALIQAATMVAAGIFLLA), 280 to 300 (LLPLFISLPLIMSFISLVGTI), 327 to 347 (LGYMMLALGIGSYQAALFHLI), 354 to 374 (ALLFLGSGSVIHSMEPLVGYS), 396 to 416 (TTFLWGTLSLCGIPPLACFWS), 425 to 445 (WLYSPFFGIIASFTAGLTAFY), 542 to 562 (LFPLLILLLFTLFIGFIGISF), 610 to 630 (TLAIFGLFIAYIFYGSAYSFF), and 719 to 739 (ISSYLFFFLCYVSLFLFFFLS).

This sequence belongs to the complex I subunit 5 family. NDH is composed of at least 16 different subunits, 5 of which are encoded in the nucleus.

Its subcellular location is the plastid. The protein resides in the chloroplast thylakoid membrane. It carries out the reaction a plastoquinone + NADH + (n+1) H(+)(in) = a plastoquinol + NAD(+) + n H(+)(out). It catalyses the reaction a plastoquinone + NADPH + (n+1) H(+)(in) = a plastoquinol + NADP(+) + n H(+)(out). In terms of biological role, NDH shuttles electrons from NAD(P)H:plastoquinone, via FMN and iron-sulfur (Fe-S) centers, to quinones in the photosynthetic chain and possibly in a chloroplast respiratory chain. The immediate electron acceptor for the enzyme in this species is believed to be plastoquinone. Couples the redox reaction to proton translocation, and thus conserves the redox energy in a proton gradient. This Triticum aestivum (Wheat) protein is NAD(P)H-quinone oxidoreductase subunit 5, chloroplastic (ndhF).